The following is a 616-amino-acid chain: Dihydroxy-acid dehydratase (616 aa).

Position 81 (Asp-81) interacts with Mg(2+). Residue Cys-122 coordinates [2Fe-2S] cluster. Mg(2+) is bound by residues Asp-123 and Lys-124. Lys-124 carries the N6-carboxylysine modification. Residue Cys-195 participates in [2Fe-2S] cluster binding. Residue Glu-491 coordinates Mg(2+). Ser-517 functions as the Proton acceptor in the catalytic mechanism.

It belongs to the IlvD/Edd family. In terms of assembly, homodimer. The cofactor is [2Fe-2S] cluster. Mg(2+) is required as a cofactor.

It catalyses the reaction (2R)-2,3-dihydroxy-3-methylbutanoate = 3-methyl-2-oxobutanoate + H2O. The enzyme catalyses (2R,3R)-2,3-dihydroxy-3-methylpentanoate = (S)-3-methyl-2-oxopentanoate + H2O. It participates in amino-acid biosynthesis; L-isoleucine biosynthesis; L-isoleucine from 2-oxobutanoate: step 3/4. It functions in the pathway amino-acid biosynthesis; L-valine biosynthesis; L-valine from pyruvate: step 3/4. In terms of biological role, functions in the biosynthesis of branched-chain amino acids. Catalyzes the dehydration of (2R,3R)-2,3-dihydroxy-3-methylpentanoate (2,3-dihydroxy-3-methylvalerate) into 2-oxo-3-methylpentanoate (2-oxo-3-methylvalerate) and of (2R)-2,3-dihydroxy-3-methylbutanoate (2,3-dihydroxyisovalerate) into 2-oxo-3-methylbutanoate (2-oxoisovalerate), the penultimate precursor to L-isoleucine and L-valine, respectively. This Salmonella paratyphi C (strain RKS4594) protein is Dihydroxy-acid dehydratase.